Consider the following 433-residue polypeptide: Ectonucleoside triphosphate diphosphohydrolase 5 (433 aa).

The signal sequence occupies residues 1–24; sequence MATTWGAAFFMLVASCVCSTVFHR. Catalysis depends on Glu-172, which acts as the Proton acceptor. A glycan (N-linked (GlcNAc...) asparagine) is linked at Asn-232. 2 disulfides stabilise this stretch: Cys-272–Cys-308 and Cys-368–Cys-382.

Belongs to the GDA1/CD39 NTPase family. As to quaternary structure, monomer; active form. Homodimer; disulfide-linked. Homodimers are enzymatically inactive. Ca(2+) is required as a cofactor. The cofactor is Mg(2+). In terms of processing, N-glycosylated; high-mannose type.

It localises to the endoplasmic reticulum. The protein resides in the secreted. It carries out the reaction a ribonucleoside 5'-diphosphate + H2O = a ribonucleoside 5'-phosphate + phosphate + H(+). It catalyses the reaction GDP + H2O = GMP + phosphate + H(+). The catalysed reaction is UDP + H2O = UMP + phosphate + H(+). The enzyme catalyses IDP + H2O = IMP + phosphate + H(+). It carries out the reaction CDP + H2O = CMP + phosphate + H(+). It catalyses the reaction ADP + H2O = AMP + phosphate + H(+). Its pathway is protein modification; protein glycosylation. Its function is as follows. Hydrolyzes nucleoside diphosphates with a preference for GDP, IDP and UDP compared to ADP and CDP. In the lumen of the endoplasmic reticulum, hydrolyzes UDP that acts as an end-product feedback inhibitor of the UDP-Glc:glycoprotein glucosyltransferases. UMP can be transported back by an UDP-sugar antiporter to the cytosol where it is consumed to regenerate UDP-glucose. Therefore, it positively regulates protein reglucosylation by clearing UDP from the ER lumen and by promoting the regeneration of UDP-glucose. Protein reglucosylation is essential to proper glycoprotein folding and quality control in the ER. The chain is Ectonucleoside triphosphate diphosphohydrolase 5 (ENTPD5) from Ailuropoda melanoleuca (Giant panda).